Here is a 176-residue protein sequence, read N- to C-terminus: Deoxyuridine 5'-triphosphate nucleotidohydrolase (176 aa).

Substrate is bound by residues 67–69 (RSG), asparagine 80, 84–86 (TVD), and lysine 94. The disordered stretch occupies residues 141–176 (GGFGSTGGHASVDGAEGGITHGGNSYASVVSDREGQ).

This sequence belongs to the dUTPase family. The cofactor is Mg(2+).

The enzyme catalyses dUTP + H2O = dUMP + diphosphate + H(+). Its pathway is pyrimidine metabolism; dUMP biosynthesis; dUMP from dCTP (dUTP route): step 2/2. Its function is as follows. This enzyme is involved in nucleotide metabolism: it produces dUMP, the immediate precursor of thymidine nucleotides and it decreases the intracellular concentration of dUTP so that uracil cannot be incorporated into DNA. This Streptomyces griseus subsp. griseus (strain JCM 4626 / CBS 651.72 / NBRC 13350 / KCC S-0626 / ISP 5235) protein is Deoxyuridine 5'-triphosphate nucleotidohydrolase.